The primary structure comprises 417 residues: NADH-quinone oxidoreductase subunit D (417 aa).

It belongs to the complex I 49 kDa subunit family. In terms of assembly, NDH-1 is composed of 14 different subunits. Subunits NuoB, C, D, E, F, and G constitute the peripheral sector of the complex.

Its subcellular location is the cell inner membrane. It catalyses the reaction a quinone + NADH + 5 H(+)(in) = a quinol + NAD(+) + 4 H(+)(out). In terms of biological role, NDH-1 shuttles electrons from NADH, via FMN and iron-sulfur (Fe-S) centers, to quinones in the respiratory chain. The immediate electron acceptor for the enzyme in this species is believed to be ubiquinone. Couples the redox reaction to proton translocation (for every two electrons transferred, four hydrogen ions are translocated across the cytoplasmic membrane), and thus conserves the redox energy in a proton gradient. The sequence is that of NADH-quinone oxidoreductase subunit D from Nitrosospira multiformis (strain ATCC 25196 / NCIMB 11849 / C 71).